A 677-amino-acid polypeptide reads, in one-letter code: MAQATISITVNGEAKEVEATTTGVELFAEDKNIIAVKINGENRDLYTPLNDGDTVDPIALDSEDGLAIMRHSATHVMAQAVQEVYPNAKLGVGPVIKDGFYYDFQVDQPFTPDDLKDIEKRMQRIIKSSQSFRRRSVTEEEALKEEADQPFKIELIEDKEAHLDPAAATEISEKELSFYDNVDRDGNVVWKDLCRGPHLPNTRYIKAFKIERSAAAYWRGSEKNPTMQRIYGTAWATKEDLKAYQTRLEEAAKRDHRKLGAEMDLFSFPDEIGPGLAVFHPKGAAVINAMEDYSREMHRKHHYSFVQTPHITKGGLYETSGHLHWYKDGMYPPMHLDEEKDADGNITKPGADYYLKPMNCPMHNLIFKSRQRSYRELPLRLFEFGTVYRYEKSGEVHGLTRVRGLTQDDSHIYCTREQMKDELTSLLTFVLNLLKDFGLTDFYLELSTKDPNKYVGSDEIWEEATNTLAEVAKESNLELVDDPCGAAFYGPKISVQARDAIGRTWQVSTIQLDFNLPERFQLEYIAKDGTHQRPVMIHRALFGSIERFFAVLLEHYAGAFPAWLAPVQVLGVPVADEFAPHLAGFVKSLEDEMVRCEIDYSDDRFGKKIRNASKSKVPFILIVGEEDMNNNAVSFRFRDGSQLNGVPVDTAREQILTVIKKRVQVNSADDFNAAVAE.

In terms of domain architecture, TGS spans 1-59; that stretch reads MAQATISITVNGEAKEVEATTTGVELFAEDKNIIAVKINGENRDLYTPLNDGDTVDPIA. A catalytic region spans residues 255-561; that stretch reads DHRKLGAEMD…LLEHYAGAFP (307 aa). Zn(2+) contacts are provided by C360, H411, and H538.

Belongs to the class-II aminoacyl-tRNA synthetase family. In terms of assembly, homodimer. Zn(2+) serves as cofactor.

The protein resides in the cytoplasm. It catalyses the reaction tRNA(Thr) + L-threonine + ATP = L-threonyl-tRNA(Thr) + AMP + diphosphate + H(+). Functionally, catalyzes the attachment of threonine to tRNA(Thr) in a two-step reaction: L-threonine is first activated by ATP to form Thr-AMP and then transferred to the acceptor end of tRNA(Thr). Also edits incorrectly charged L-seryl-tRNA(Thr). This Bifidobacterium longum (strain DJO10A) protein is Threonine--tRNA ligase.